Consider the following 192-residue polypeptide: Ribose 1,5-bisphosphate phosphokinase PhnN (192 aa).

Glycine 15 to aspartate 22 serves as a coordination point for ATP.

Belongs to the ribose 1,5-bisphosphokinase family.

It carries out the reaction alpha-D-ribose 1,5-bisphosphate + ATP = 5-phospho-alpha-D-ribose 1-diphosphate + ADP. It participates in metabolic intermediate biosynthesis; 5-phospho-alpha-D-ribose 1-diphosphate biosynthesis; 5-phospho-alpha-D-ribose 1-diphosphate from D-ribose 5-phosphate (route II): step 3/3. Its function is as follows. Catalyzes the phosphorylation of ribose 1,5-bisphosphate to 5-phospho-D-ribosyl alpha-1-diphosphate (PRPP). The sequence is that of Ribose 1,5-bisphosphate phosphokinase PhnN from Brucella melitensis biotype 2 (strain ATCC 23457).